The following is a 181-amino-acid chain: UPF0215 protein AF_1433 (181 aa).

Belongs to the UPF0215 family.

The sequence is that of UPF0215 protein AF_1433 from Archaeoglobus fulgidus (strain ATCC 49558 / DSM 4304 / JCM 9628 / NBRC 100126 / VC-16).